Reading from the N-terminus, the 331-residue chain is Ornithine carbamoyltransferase (331 aa).

Residues 55-58 (STRT), glutamine 82, arginine 106, and 133-136 (HPTQ) each bind carbamoyl phosphate. L-ornithine is bound by residues asparagine 166, aspartate 230, and 234-235 (SM). Carbamoyl phosphate is bound by residues 272–273 (CL) and arginine 317.

This sequence belongs to the aspartate/ornithine carbamoyltransferase superfamily. OTCase family.

Its subcellular location is the cytoplasm. The enzyme catalyses carbamoyl phosphate + L-ornithine = L-citrulline + phosphate + H(+). The protein operates within amino-acid biosynthesis; L-arginine biosynthesis; L-arginine from L-ornithine and carbamoyl phosphate: step 1/3. Functionally, reversibly catalyzes the transfer of the carbamoyl group from carbamoyl phosphate (CP) to the N(epsilon) atom of ornithine (ORN) to produce L-citrulline. The protein is Ornithine carbamoyltransferase (argF) of Neisseria meningitidis serogroup B (strain ATCC BAA-335 / MC58).